Here is a 153-residue protein sequence, read N- to C-terminus: SsrA-binding protein (153 aa).

The interval 132–153 (REKDWLRERERVMKHDTRRRSD) is disordered.

It belongs to the SmpB family.

The protein localises to the cytoplasm. Required for rescue of stalled ribosomes mediated by trans-translation. Binds to transfer-messenger RNA (tmRNA), required for stable association of tmRNA with ribosomes. tmRNA and SmpB together mimic tRNA shape, replacing the anticodon stem-loop with SmpB. tmRNA is encoded by the ssrA gene; the 2 termini fold to resemble tRNA(Ala) and it encodes a 'tag peptide', a short internal open reading frame. During trans-translation Ala-aminoacylated tmRNA acts like a tRNA, entering the A-site of stalled ribosomes, displacing the stalled mRNA. The ribosome then switches to translate the ORF on the tmRNA; the nascent peptide is terminated with the 'tag peptide' encoded by the tmRNA and targeted for degradation. The ribosome is freed to recommence translation, which seems to be the essential function of trans-translation. This is SsrA-binding protein from Bordetella avium (strain 197N).